The primary structure comprises 359 residues: 3-dehydroquinate synthase (359 aa).

NAD(+) contacts are provided by residues 71–76, 105–109, 129–130, Lys142, and Lys151; these read DGEAYK, GVVGD, and TT. Glu184, His247, and His264 together coordinate Zn(2+).

It belongs to the sugar phosphate cyclases superfamily. Dehydroquinate synthase family. Requires Co(2+) as cofactor. Zn(2+) serves as cofactor. NAD(+) is required as a cofactor.

The protein localises to the cytoplasm. The catalysed reaction is 7-phospho-2-dehydro-3-deoxy-D-arabino-heptonate = 3-dehydroquinate + phosphate. Its pathway is metabolic intermediate biosynthesis; chorismate biosynthesis; chorismate from D-erythrose 4-phosphate and phosphoenolpyruvate: step 2/7. Functionally, catalyzes the conversion of 3-deoxy-D-arabino-heptulosonate 7-phosphate (DAHP) to dehydroquinate (DHQ). The chain is 3-dehydroquinate synthase from Burkholderia cenocepacia (strain ATCC BAA-245 / DSM 16553 / LMG 16656 / NCTC 13227 / J2315 / CF5610) (Burkholderia cepacia (strain J2315)).